Here is a 441-residue protein sequence, read N- to C-terminus: Ribulose bisphosphate carboxylase large chain (441 aa).

Residues N89 and T139 each contribute to the substrate site. K141 serves as the catalytic Proton acceptor. K143 contacts substrate. Residues K167, D169, and E170 each contribute to the Mg(2+) site. K167 bears the N6-carboxylysine mark. H260 acts as the Proton acceptor in catalysis. Substrate-binding residues include R261, H293, and S345.

Belongs to the RuBisCO large chain family. Type I subfamily. Heterohexadecamer of 8 large chains and 8 small chains; disulfide-linked. The disulfide link is formed within the large subunit homodimers. It depends on Mg(2+) as a cofactor. Post-translationally, the disulfide bond which can form in the large chain dimeric partners within the hexadecamer appears to be associated with oxidative stress and protein turnover.

Its subcellular location is the plastid. The protein resides in the chloroplast. It catalyses the reaction 2 (2R)-3-phosphoglycerate + 2 H(+) = D-ribulose 1,5-bisphosphate + CO2 + H2O. The enzyme catalyses D-ribulose 1,5-bisphosphate + O2 = 2-phosphoglycolate + (2R)-3-phosphoglycerate + 2 H(+). Its function is as follows. RuBisCO catalyzes two reactions: the carboxylation of D-ribulose 1,5-bisphosphate, the primary event in carbon dioxide fixation, as well as the oxidative fragmentation of the pentose substrate in the photorespiration process. Both reactions occur simultaneously and in competition at the same active site. This chain is Ribulose bisphosphate carboxylase large chain, found in Symphoricarpos albus (Common snowberry).